A 143-amino-acid polypeptide reads, in one-letter code: Nucleoside diphosphate kinase (143 aa).

ATP-binding residues include K11, F59, R87, T93, R104, and N114. H117 functions as the Pros-phosphohistidine intermediate in the catalytic mechanism.

It belongs to the NDK family. Homotetramer. It depends on Mg(2+) as a cofactor.

The protein resides in the cytoplasm. It catalyses the reaction a 2'-deoxyribonucleoside 5'-diphosphate + ATP = a 2'-deoxyribonucleoside 5'-triphosphate + ADP. The enzyme catalyses a ribonucleoside 5'-diphosphate + ATP = a ribonucleoside 5'-triphosphate + ADP. In terms of biological role, major role in the synthesis of nucleoside triphosphates other than ATP. The ATP gamma phosphate is transferred to the NDP beta phosphate via a ping-pong mechanism, using a phosphorylated active-site intermediate. The protein is Nucleoside diphosphate kinase of Salmonella agona (strain SL483).